We begin with the raw amino-acid sequence, 290 residues long: Membrane protein insertase YidC (290 aa).

The first 19 residues, 1-19 (MKKKALLPLFLGIMVFLAG), serve as a signal peptide directing secretion. Residue Cys-20 is the site of N-palmitoyl cysteine attachment. Residue Cys-20 is the site of S-diacylglycerol cysteine attachment. 5 helical membrane passes run 56 to 76 (YGLAIIILVLVIRIILLPFML), 134 to 154 (MLGCLPMLIQLPIIMGLYFVL), 176 to 196 (PDIWITIIAGVLYFIQAYVSS), 207 to 224 (GYMMMVISPIMIIWISLS), and 229 to 251 (LGLYWSVSAAFLVVQTHFANIYY). Residues 270–290 (HNGGSNKKGKNTQVVSKKKKK) are disordered.

This sequence belongs to the OXA1/ALB3/YidC family. Type 2 subfamily.

Its subcellular location is the cell membrane. Required for the insertion and/or proper folding and/or complex formation of integral membrane proteins into the membrane. Involved in integration of membrane proteins that insert both dependently and independently of the Sec translocase complex, as well as at least some lipoproteins. In Staphylococcus aureus (strain Mu3 / ATCC 700698), this protein is Membrane protein insertase YidC.